Consider the following 100-residue polypeptide: NADH-quinone oxidoreductase subunit K (100 aa).

The next 3 membrane-spanning stretches (helical) occupy residues 1–21, 28–48, and 64–84; these read MIGL…GLAG, ILLL…GFVA, and FIIA…ILWF.

Belongs to the complex I subunit 4L family. In terms of assembly, NDH-1 is composed of 14 different subunits. Subunits NuoA, H, J, K, L, M, N constitute the membrane sector of the complex.

The protein resides in the cell inner membrane. The enzyme catalyses a quinone + NADH + 5 H(+)(in) = a quinol + NAD(+) + 4 H(+)(out). Its function is as follows. NDH-1 shuttles electrons from NADH, via FMN and iron-sulfur (Fe-S) centers, to quinones in the respiratory chain. The immediate electron acceptor for the enzyme in this species is believed to be ubiquinone. Couples the redox reaction to proton translocation (for every two electrons transferred, four hydrogen ions are translocated across the cytoplasmic membrane), and thus conserves the redox energy in a proton gradient. The protein is NADH-quinone oxidoreductase subunit K of Helicobacter pylori (strain B38).